A 125-amino-acid chain; its full sequence is Probable endoribonuclease HigB1 (125 aa).

It belongs to the mycobacterial HigB family.

Functionally, toxic component of an atypical, type II toxin-antitoxin chaperone (TAC) system. Probably an endoribonuclease, neutralized by its cognate antitoxin HigA which also requires SecB-like chaperone MT2006 (AC Q7D7P7). In Mycobacterium tuberculosis (strain CDC 1551 / Oshkosh), this protein is Probable endoribonuclease HigB1.